The following is a 113-amino-acid chain: MQAKAVAKQVRIAPRKARLVIDLIRGKQVGEAIAILKHTPKAASPIIEKVLNSAIANAEHNYEMEPNNLVISEAFVDEGVTLKRFRPRAMGRASRINKRTSHITIVVTEKKEG.

This sequence belongs to the universal ribosomal protein uL22 family. As to quaternary structure, part of the 50S ribosomal subunit.

This protein binds specifically to 23S rRNA; its binding is stimulated by other ribosomal proteins, e.g. L4, L17, and L20. It is important during the early stages of 50S assembly. It makes multiple contacts with different domains of the 23S rRNA in the assembled 50S subunit and ribosome. In terms of biological role, the globular domain of the protein is located near the polypeptide exit tunnel on the outside of the subunit, while an extended beta-hairpin is found that lines the wall of the exit tunnel in the center of the 70S ribosome. The protein is Large ribosomal subunit protein uL22 of Halalkalibacterium halodurans (strain ATCC BAA-125 / DSM 18197 / FERM 7344 / JCM 9153 / C-125) (Bacillus halodurans).